The sequence spans 515 residues: 1-pyrroline-5-carboxylate dehydrogenase (515 aa).

Residues E286 and C320 contribute to the active site.

Belongs to the aldehyde dehydrogenase family. RocA subfamily.

It catalyses the reaction L-glutamate 5-semialdehyde + NAD(+) + H2O = L-glutamate + NADH + 2 H(+). It participates in amino-acid degradation; L-proline degradation into L-glutamate; L-glutamate from L-proline: step 2/2. This Anoxybacillus flavithermus (strain DSM 21510 / WK1) protein is 1-pyrroline-5-carboxylate dehydrogenase.